We begin with the raw amino-acid sequence, 303 residues long: Ribonuclease Z (303 aa).

H61, H63, D65, H66, H139, D207, and H266 together coordinate Zn(2+). D65 (proton acceptor) is an active-site residue.

This sequence belongs to the RNase Z family. Homodimer. Zn(2+) is required as a cofactor.

It carries out the reaction Endonucleolytic cleavage of RNA, removing extra 3' nucleotides from tRNA precursor, generating 3' termini of tRNAs. A 3'-hydroxy group is left at the tRNA terminus and a 5'-phosphoryl group is left at the trailer molecule.. In terms of biological role, zinc phosphodiesterase, which displays some tRNA 3'-processing endonuclease activity. Probably involved in tRNA maturation, by removing a 3'-trailer from precursor tRNA. The chain is Ribonuclease Z from Clostridium kluyveri (strain ATCC 8527 / DSM 555 / NBRC 12016 / NCIMB 10680 / K1).